The sequence spans 70 residues: Cold shock-like protein CspH (70 aa).

In terms of domain architecture, CSD spans 7–67 (GIVKTFDRKS…GLRGPTAANV (61 aa)).

The protein localises to the cytoplasm. In Escherichia coli O6:H1 (strain CFT073 / ATCC 700928 / UPEC), this protein is Cold shock-like protein CspH (cspH).